A 636-amino-acid chain; its full sequence is Probable potassium transport system protein Kup (636 aa).

12 helical membrane passes run 23-43 (MALM…SPLY), 57-77 (PAHV…VVSL), 111-131 (WLLI…SMIT), 148-168 (HTLE…LFAI), 179-199 (LFGP…GYQI), 217-237 (FIAE…LALT), 258-278 (WFAM…ALLL), 287-307 (PFFL…ATVA), 348-368 (IYLP…VLLF), 377-397 (AYGF…FAVL), 409-429 (WMVL…ANIF), and 431-451 (IHEG…LMMT).

The protein belongs to the HAK/KUP transporter (TC 2.A.72) family.

The protein localises to the cell inner membrane. It carries out the reaction K(+)(in) + H(+)(in) = K(+)(out) + H(+)(out). Transport of potassium into the cell. Likely operates as a K(+):H(+) symporter. In Bordetella bronchiseptica (strain ATCC BAA-588 / NCTC 13252 / RB50) (Alcaligenes bronchisepticus), this protein is Probable potassium transport system protein Kup.